We begin with the raw amino-acid sequence, 211 residues long: MAPSRNGMILNPHFHKDWQKRVRTWFNQPARKLRRRKARQAKARRIAPRPVAGPLRPIVRCPTVRYNTKVRAGRGFTLEELKAAGINKRVARTIGIAVDPRRRNRSTESLHVNVQRLKVYRSKLILFPRKVSAPKKGDSTEEEVKMATQLTGPVMPIKIVHKKEKARMITEEEKKFNAFANLRMARANARLFGIRAKRAKEAAEQDVEKKK.

It belongs to the eukaryotic ribosomal protein eL13 family. Component of the 60S large ribosomal subunit (LSU).

Its subcellular location is the cytoplasm. Component of the ribosome, a large ribonucleoprotein complex responsible for the synthesis of proteins in the cell. The small ribosomal subunit (SSU) binds messenger RNAs (mRNAs) and translates the encoded message by selecting cognate aminoacyl-transfer RNA (tRNA) molecules. The large subunit (LSU) contains the ribosomal catalytic site termed the peptidyl transferase center (PTC), which catalyzes the formation of peptide bonds, thereby polymerizing the amino acids delivered by tRNAs into a polypeptide chain. The nascent polypeptides leave the ribosome through a tunnel in the LSU and interact with protein factors that function in enzymatic processing, targeting, and the membrane insertion of nascent chains at the exit of the ribosomal tunnel. As part of the LSU, it is probably required for its formation and the maturation of rRNAs. This Ictalurus punctatus (Channel catfish) protein is Large ribosomal subunit protein eL13 (rpl13).